The primary structure comprises 1215 residues: DNA-directed RNA polymerase subunit beta' (1215 aa).

The Zn(2+) site is built by C60, C62, C75, and C78. Residues D450, D452, and D454 each coordinate Mg(2+). 4 residues coordinate Zn(2+): C819, C893, C900, and C903.

Belongs to the RNA polymerase beta' chain family. As to quaternary structure, the RNAP catalytic core consists of 2 alpha, 1 beta, 1 beta' and 1 omega subunit. When a sigma factor is associated with the core the holoenzyme is formed, which can initiate transcription. Mg(2+) serves as cofactor. Requires Zn(2+) as cofactor.

The catalysed reaction is RNA(n) + a ribonucleoside 5'-triphosphate = RNA(n+1) + diphosphate. In terms of biological role, DNA-dependent RNA polymerase catalyzes the transcription of DNA into RNA using the four ribonucleoside triphosphates as substrates. This chain is DNA-directed RNA polymerase subunit beta', found in Levilactobacillus brevis (strain ATCC 367 / BCRC 12310 / CIP 105137 / JCM 1170 / LMG 11437 / NCIMB 947 / NCTC 947) (Lactobacillus brevis).